The following is a 439-amino-acid chain: Phosphomethylpyrimidine synthase (439 aa).

Substrate contacts are provided by residues Asn-67, Met-96, Tyr-126, His-165, 187-189 (SRG), 228-231 (DSLR), and Glu-267. His-271 lines the Zn(2+) pocket. Substrate is bound at residue Tyr-294. His-335 lines the Zn(2+) pocket. Positions 411, 414, and 418 each coordinate [4Fe-4S] cluster.

This sequence belongs to the ThiC family. The cofactor is [4Fe-4S] cluster.

The enzyme catalyses 5-amino-1-(5-phospho-beta-D-ribosyl)imidazole + S-adenosyl-L-methionine = 4-amino-2-methyl-5-(phosphooxymethyl)pyrimidine + CO + 5'-deoxyadenosine + formate + L-methionine + 3 H(+). Its pathway is cofactor biosynthesis; thiamine diphosphate biosynthesis. Its function is as follows. Catalyzes the synthesis of the hydroxymethylpyrimidine phosphate (HMP-P) moiety of thiamine from aminoimidazole ribotide (AIR) in a radical S-adenosyl-L-methionine (SAM)-dependent reaction. The polypeptide is Phosphomethylpyrimidine synthase (Ignicoccus hospitalis (strain KIN4/I / DSM 18386 / JCM 14125)).